A 752-amino-acid polypeptide reads, in one-letter code: Reticulon-1-B (752 aa).

Disordered regions lie at residues 1–57 (MAAN…TSTD), 264–319 (EYPG…SEKQ), 334–424 (KAKE…SPSI), and 444–465 (ESCD…SPMM). Residues 264 to 273 (EYPGNQQGKS) show a composition bias toward polar residues. Residues 334 to 361 (KAKEGTKRFSSETNDEKQSRSFHAEKQD) are compositionally biased toward basic and acidic residues. The segment covering 363-383 (TVMSTEATSASHYTKASSAES) has biased composition (polar residues). The Reticulon domain occupies 566 to 752 (AIDLLYWRDV…AKIPGTKQKE (187 aa)). A run of 2 helical transmembrane segments spans residues 580-600 (IVFG…VVSV) and 684-704 (VLMW…LLIM).

Isoform A and isoform C are both expressed in the animal hemisphere (presumptive neural ectoderm) of blastula and gastrula stage embryos, and along the anterior neural border, in the panplacodal primordium, and in the dorsolateral side of archenteron roof of late neurula embryos. At the tailbud stage, expression of the isoforms begin to differ. Isoform A localizes to the cranial placodes including the trigeminal placode, lateral line placode, olfactory placode and otic vesicle. Isoform C localizes to the central nervous system, including the spinal cord, prosencephalon, mesencephalon and rhombencephalon, as well as the lateral line placode, otic vesicle and pronephros.

Its subcellular location is the endoplasmic reticulum membrane. The protein resides in the nucleus. Functionally, inhibits amyloid precursor protein processing, probably by blocking BACE1 activity. This is Reticulon-1-B (rtn1-b) from Xenopus laevis (African clawed frog).